A 165-amino-acid polypeptide reads, in one-letter code: Chaperone protein SicA (165 aa).

This sequence belongs to the LcrH/SycD chaperone family. Dimer or higher-order oligomers.

It is found in the cytoplasm. Its function is as follows. Type III secretion-associated chaperone required for SipB and SipC stabilization. Prevents premature association of SipB with SipC, which may lead to their targeting for degradation. Along with InvF, required for transcription activation of sigDE (sopB pipC), sicAsipBCDA, and sopE. This is Chaperone protein SicA (sicA) from Salmonella dublin.